The primary structure comprises 395 residues: Phosphoglycerate kinase (395 aa).

Substrate is bound by residues 21–23 (DLN), R36, 59–62 (HLGR), R113, and R146. Residues K197, E324, and 350 to 353 (GGDT) contribute to the ATP site.

It belongs to the phosphoglycerate kinase family. In terms of assembly, monomer.

It is found in the cytoplasm. The enzyme catalyses (2R)-3-phosphoglycerate + ATP = (2R)-3-phospho-glyceroyl phosphate + ADP. It participates in carbohydrate degradation; glycolysis; pyruvate from D-glyceraldehyde 3-phosphate: step 2/5. The protein is Phosphoglycerate kinase of Acinetobacter baumannii (strain ACICU).